Here is a 171-residue protein sequence, read N- to C-terminus: MEILNELISTYKDHPKEGIDFKDVLEIVQHPIVFKELILKMASSKIVSNAEALISIDARGFIFGSAISFQVSKPMIFARKPGKLPGELIKKKYTLEYGENSLSIQKKSLNNFYSFAIIDDLLATGGTVNCVSNILKDNGKKITGLLTVVELIELEGRSKFDFPVESWLKCK.

Belongs to the purine/pyrimidine phosphoribosyltransferase family. Homodimer.

It localises to the cytoplasm. The catalysed reaction is AMP + diphosphate = 5-phospho-alpha-D-ribose 1-diphosphate + adenine. The protein operates within purine metabolism; AMP biosynthesis via salvage pathway; AMP from adenine: step 1/1. Functionally, catalyzes a salvage reaction resulting in the formation of AMP, that is energically less costly than de novo synthesis. In Prochlorococcus marinus subsp. pastoris (strain CCMP1986 / NIES-2087 / MED4), this protein is Adenine phosphoribosyltransferase (apt).